The sequence spans 276 residues: Dermonecrotic toxin LspiSicTox-betaIE4ii (276 aa).

The active site involves His-5. Mg(2+) contacts are provided by Glu-25 and Asp-27. The active-site Nucleophile is His-41. Disulfide bonds link Cys-45-Cys-51 and Cys-47-Cys-189. Position 85 (Asp-85) interacts with Mg(2+).

It belongs to the arthropod phospholipase D family. Class II subfamily. It depends on Mg(2+) as a cofactor. In terms of tissue distribution, expressed by the venom gland.

Its subcellular location is the secreted. It catalyses the reaction an N-(acyl)-sphingosylphosphocholine = an N-(acyl)-sphingosyl-1,3-cyclic phosphate + choline. The catalysed reaction is an N-(acyl)-sphingosylphosphoethanolamine = an N-(acyl)-sphingosyl-1,3-cyclic phosphate + ethanolamine. It carries out the reaction a 1-acyl-sn-glycero-3-phosphocholine = a 1-acyl-sn-glycero-2,3-cyclic phosphate + choline. The enzyme catalyses a 1-acyl-sn-glycero-3-phosphoethanolamine = a 1-acyl-sn-glycero-2,3-cyclic phosphate + ethanolamine. In terms of biological role, dermonecrotic toxins cleave the phosphodiester linkage between the phosphate and headgroup of certain phospholipids (sphingolipid and lysolipid substrates), forming an alcohol (often choline) and a cyclic phosphate. This toxin acts on sphingomyelin (SM). It may also act on ceramide phosphoethanolamine (CPE), lysophosphatidylcholine (LPC) and lysophosphatidylethanolamine (LPE), but not on lysophosphatidylserine (LPS), and lysophosphatidylglycerol (LPG). It acts by transphosphatidylation, releasing exclusively cyclic phosphate products as second products. Induces dermonecrosis, hemolysis, increased vascular permeability, edema, inflammatory response, and platelet aggregation. This Loxosceles spinulosa (Recluse spider) protein is Dermonecrotic toxin LspiSicTox-betaIE4ii.